The sequence spans 892 residues: Translation initiation factor IF-2 (892 aa).

The interval 88-306 (KKRTFVKRDP…LQQGFQKPAQ (219 aa)) is disordered. Composition is skewed to basic and acidic residues over residues 93 to 159 (VKRD…KDKV) and 166 to 216 (DMIK…EENK). Residues 254–269 (GRGRNAKAARPAKKGK) are compositionally biased toward basic residues. Basic and acidic residues predominate over residues 270–282 (HAESKADREEARA). The region spanning 391 to 560 (PRAPVVTIMG…LLQAEVLELK (170 aa)) is the tr-type G domain. Residues 400-407 (GHVDHGKT) are G1. 400–407 (GHVDHGKT) is a binding site for GTP. Residues 425–429 (GITQH) form a G2 region. The segment at 446–449 (DTPG) is G3. GTP contacts are provided by residues 446-450 (DTPGH) and 500-503 (NKID). A G4 region spans residues 500–503 (NKID). Residues 536–538 (SAK) form a G5 region.

Belongs to the TRAFAC class translation factor GTPase superfamily. Classic translation factor GTPase family. IF-2 subfamily.

It is found in the cytoplasm. Functionally, one of the essential components for the initiation of protein synthesis. Protects formylmethionyl-tRNA from spontaneous hydrolysis and promotes its binding to the 30S ribosomal subunits. Also involved in the hydrolysis of GTP during the formation of the 70S ribosomal complex. In Salmonella schwarzengrund (strain CVM19633), this protein is Translation initiation factor IF-2.